Here is a 462-residue protein sequence, read N- to C-terminus: Chromosomal replication initiator protein DnaA (462 aa).

Residues 1-84 (MAVSLWQQCI…RFDIGSRPSA (84 aa)) form a domain I, interacts with DnaA modulators region. The interval 84-125 (APRPVQATAAVERPKFEQNTKPAKTSFNVNSPEPAMAANHRS) is domain II. Positions 126–342 (NINRTYQFEN…GALNRVIANA (217 aa)) are domain III, AAA+ region. The ATP site is built by Gly170, Gly172, Lys173, and Thr174. Residues 343–462 (NFTGRPITID…YANLIRTLSS (120 aa)) form a domain IV, binds dsDNA region.

The protein belongs to the DnaA family. In terms of assembly, oligomerizes as a right-handed, spiral filament on DNA at oriC.

Its subcellular location is the cytoplasm. Its function is as follows. Plays an essential role in the initiation and regulation of chromosomal replication. ATP-DnaA binds to the origin of replication (oriC) to initiate formation of the DNA replication initiation complex once per cell cycle. Binds the DnaA box (a 9 base pair repeat at the origin) and separates the double-stranded (ds)DNA. Forms a right-handed helical filament on oriC DNA; dsDNA binds to the exterior of the filament while single-stranded (ss)DNA is stabiized in the filament's interior. The ATP-DnaA-oriC complex binds and stabilizes one strand of the AT-rich DNA unwinding element (DUE), permitting loading of DNA polymerase. After initiation quickly degrades to an ADP-DnaA complex that is not apt for DNA replication. Binds acidic phospholipids. The polypeptide is Chromosomal replication initiator protein DnaA (Shewanella sediminis (strain HAW-EB3)).